The following is a 71-amino-acid chain: UPF0435 protein SE_1565 (71 aa).

The protein belongs to the UPF0435 family.

The chain is UPF0435 protein SE_1565 from Staphylococcus epidermidis (strain ATCC 12228 / FDA PCI 1200).